We begin with the raw amino-acid sequence, 319 residues long: Transcription factor VBP (319 aa).

Low complexity-rich tracts occupy residues 1–31 and 143–158; these read MPGR…GAVA and ASAS…STAV. Disordered regions lie at residues 1 to 35 and 139 to 186; these read MPGR…QQPE and EKEP…DPDC. Polar residues predominate over residues 159 to 180; the sequence is YQQSEAASSTESPPQNERNTPS. Residues 243 to 306 form the bZIP domain; the sequence is DEKYWTRRKK…GRCKNIVSKY (64 aa). Residues 245–265 are basic motif; that stretch reads KYWTRRKKNNVAAKRSRDARR. A leucine-zipper region spans residues 266-273; sequence LKENQITI.

The protein belongs to the bZIP family. PAR subfamily. In terms of assembly, binds DNA as a homodimer or a heterodimer. Exists as a stable dimer in the absence of DNA. Isoform 1 and isoform 3 are expressed in a variety of somatic tissues, including liver, heart, intestine, stomach and kidney. Both isoforms are also expressed in hepatoma (LMH) cells and in embryonic fibroblast cell lines. Isoform 2 and isoform 4 are expressed in adult heart and intestine.

The protein localises to the nucleus. Functionally, transcription factor that binds to and transactivates the vitellogenin II (VTG2) promoter. Binds to the palindromic sequence 5'-GTTTACATAAAC-3'. The polypeptide is Transcription factor VBP (TEF) (Gallus gallus (Chicken)).